The sequence spans 339 residues: Adenosine deaminase (339 aa).

His15 and His17 together coordinate Zn(2+). 3 residues coordinate substrate: His17, Asp19, and Gly172. Residue His199 coordinates Zn(2+). The Proton donor role is filled by Glu202. Asp279 provides a ligand contact to Zn(2+).

It belongs to the metallo-dependent hydrolases superfamily. Adenosine and AMP deaminases family. Adenosine deaminase subfamily. Requires Zn(2+) as cofactor.

It catalyses the reaction adenosine + H2O + H(+) = inosine + NH4(+). The enzyme catalyses 2'-deoxyadenosine + H2O + H(+) = 2'-deoxyinosine + NH4(+). In terms of biological role, catalyzes the hydrolytic deamination of adenosine and 2-deoxyadenosine. The chain is Adenosine deaminase from Lacticaseibacillus paracasei (strain ATCC 334 / BCRC 17002 / CCUG 31169 / CIP 107868 / KCTC 3260 / NRRL B-441) (Lactobacillus paracasei).